The following is a 271-amino-acid chain: Nus factor SuhB (271 aa).

Mg(2+) is bound by residues Glu-67, Asp-86, and Leu-88. Substrate is bound at residue Glu-67. Substrate is bound by residues 88–91 (LDGT), Arg-187, and Asp-216.

The protein belongs to the inositol monophosphatase superfamily. As to quaternary structure, homodimer. The rRNA transcription and antitermination complex (rrnTAC) consists of RNA polymerase (RNAP), NusA, NusB, NusE (rpsJ), NusG, SubB, ribosomal protein S4, DNA and precursor rRNA; S4 is more flexible than other subunits. Interacts with the ribosome and with RNA polymerase. The cofactor is Mg(2+).

The protein resides in the cytoplasm. The enzyme catalyses a myo-inositol phosphate + H2O = myo-inositol + phosphate. In terms of biological role, part of the processive rRNA transcription and antitermination complex (rrnTAC). The complex forms an RNA-chaperone ring around the RNA exit tunnel of RNA polymerase (RNAP). It supports rapid transcription and antitermination of rRNA operons, cotranscriptional rRNA folding, and annealing of distal rRNA regions to allow correct ribosome biogenesis. This subunit may play a central role in organizing the structure. A ribosome-associated protein, deletion of which alters the expression of 494 genes, suggesting a role in global gene regulation. Involved in control of pathogenesis-related genes. Required for the activation of virulence factors associated with acute infections (type 3 secretion system, T3SS) while suppressing virulence factors associated with chronic infections (biofilm formation and type 6 secretion system, T6SS). It probably acts at a post-transcriptional level. This chain is Nus factor SuhB, found in Pseudomonas aeruginosa (strain ATCC 15692 / DSM 22644 / CIP 104116 / JCM 14847 / LMG 12228 / 1C / PRS 101 / PAO1).